The following is a 237-amino-acid chain: Class B acid phosphatase (237 aa).

Positions 1 to 23 (MKKITLALSAVCLLFTLNHSANA) are cleaved as a signal peptide. Aspartate 69 acts as the Nucleophile in catalysis. Aspartate 69 and aspartate 71 together coordinate Mg(2+). Catalysis depends on aspartate 71, which acts as the Proton donor. Substrate-binding positions include 137 to 138 (TG) and lysine 177. Aspartate 192 provides a ligand contact to Mg(2+).

The protein belongs to the class B bacterial acid phosphatase family. In terms of assembly, homotetramer. Mg(2+) serves as cofactor.

The protein localises to the periplasm. The catalysed reaction is a phosphate monoester + H2O = an alcohol + phosphate. Functionally, dephosphorylates several organic phosphate monoesters including monophosphate nucleotides (NMPs), coenzyme A (CoA), nicotinamide adenine dinucleotide phosphate (NADP), flavin mononucleotide (FMN) and phosphorylated 5-6 carbon sugars in vitro. Also has a phosphotransferase activity catalyzing the transfer of low-energy phosphate groups from organic phosphate monoesters to free hydroxyl groups of various organic compounds. The chain is Class B acid phosphatase (aphA) from Salmonella typhi.